Reading from the N-terminus, the 321-residue chain is Anthranilate phosphoribosyltransferase (321 aa).

Residues glycine 72, 75–76, threonine 80, 82–85, 99–107, and serine 111 contribute to the 5-phospho-alpha-D-ribose 1-diphosphate site; these read GD, NVST, and KHGNVSVTS. Residue glycine 72 coordinates anthranilate. Position 84 (serine 84) interacts with Mg(2+). Position 102 (asparagine 102) interacts with anthranilate. Arginine 157 lines the anthranilate pocket. Aspartate 216 and glutamate 217 together coordinate Mg(2+).

This sequence belongs to the anthranilate phosphoribosyltransferase family. Homodimer. It depends on Mg(2+) as a cofactor.

It carries out the reaction N-(5-phospho-beta-D-ribosyl)anthranilate + diphosphate = 5-phospho-alpha-D-ribose 1-diphosphate + anthranilate. It functions in the pathway amino-acid biosynthesis; L-tryptophan biosynthesis; L-tryptophan from chorismate: step 2/5. Catalyzes the transfer of the phosphoribosyl group of 5-phosphorylribose-1-pyrophosphate (PRPP) to anthranilate to yield N-(5'-phosphoribosyl)-anthranilate (PRA). This Methanococcus vannielii (strain ATCC 35089 / DSM 1224 / JCM 13029 / OCM 148 / SB) protein is Anthranilate phosphoribosyltransferase.